We begin with the raw amino-acid sequence, 292 residues long: Protein/nucleic acid deglycase HchA (292 aa).

Polar residues predominate over residues 1-12 (MSQDVNELSKQP). Residues 1-23 (MSQDVNELSKQPTPDKAEDNAFF) form a disordered region. Cys-190 (nucleophile) is an active-site residue.

This sequence belongs to the peptidase C56 family. HchA subfamily.

It is found in the cytoplasm. It catalyses the reaction N(omega)-(1-hydroxy-2-oxopropyl)-L-arginyl-[protein] + H2O = lactate + L-arginyl-[protein] + H(+). It carries out the reaction N(6)-(1-hydroxy-2-oxopropyl)-L-lysyl-[protein] + H2O = lactate + L-lysyl-[protein] + H(+). The catalysed reaction is S-(1-hydroxy-2-oxopropyl)-L-cysteinyl-[protein] + H2O = lactate + L-cysteinyl-[protein] + H(+). The enzyme catalyses N(omega)-(1-hydroxy-2-oxoethyl)-L-arginyl-[protein] + H2O = L-arginyl-[protein] + glycolate + H(+). It catalyses the reaction N(6)-(1-hydroxy-2-oxoethyl)-L-lysyl-[protein] + H2O = glycolate + L-lysyl-[protein] + H(+). It carries out the reaction S-(1-hydroxy-2-oxoethyl)-L-cysteinyl-[protein] + H2O = glycolate + L-cysteinyl-[protein] + H(+). The catalysed reaction is N(2)-(1-hydroxy-2-oxopropyl)-dGTP + H2O = lactate + dGTP + H(+). The enzyme catalyses N(2)-(1-hydroxy-2-oxopropyl)-GTP + H2O = lactate + GTP + H(+). It catalyses the reaction N(2)-(1-hydroxy-2-oxopropyl)-GDP + H2O = lactate + GDP + H(+). It carries out the reaction N(2)-(1-hydroxy-2-oxopropyl)-GMP + H2O = lactate + GMP + H(+). The catalysed reaction is N(2)-(1-hydroxy-2-oxoethyl)-dGTP + H2O = dGTP + glycolate + H(+). The enzyme catalyses N(2)-(1-hydroxy-2-oxoethyl)-GTP + H2O = glycolate + GTP + H(+). It catalyses the reaction N(2)-(1-hydroxy-2-oxoethyl)-GDP + H2O = glycolate + GDP + H(+). It carries out the reaction N(2)-(1-hydroxy-2-oxoethyl)-GMP + H2O = glycolate + GMP + H(+). The catalysed reaction is an N(2)-(1-hydroxy-2-oxopropyl)-guanosine in RNA + H2O = a guanosine in RNA + lactate + H(+). The enzyme catalyses an N(2)-(1-hydroxy-2-oxopropyl)-2'-deoxyguanosine in DNA + H2O = a 2'-deoxyguanosine in DNA + lactate + H(+). It catalyses the reaction an N(2)-(1-hydroxy-2-oxoethyl)-guanosine in RNA + H2O = a guanosine in RNA + glycolate + H(+). It carries out the reaction an N(2)-(1-hydroxy-2-oxoethyl)-2'-deoxyguanosine in DNA + H2O = a 2'-deoxyguanosine in DNA + glycolate + H(+). Its function is as follows. Protein and nucleotide deglycase that catalyzes the deglycation of the Maillard adducts formed between amino groups of proteins or nucleotides and reactive carbonyl groups of glyoxals. Thus, functions as a protein deglycase that repairs methylglyoxal- and glyoxal-glycated proteins, and releases repaired proteins and lactate or glycolate, respectively. Deglycates cysteine, arginine and lysine residues in proteins, and thus reactivates these proteins by reversing glycation by glyoxals. Acts on early glycation intermediates (hemithioacetals and aminocarbinols), preventing the formation of Schiff bases and advanced glycation endproducts (AGE). Also functions as a nucleotide deglycase able to repair glycated guanine in the free nucleotide pool (GTP, GDP, GMP, dGTP) and in DNA and RNA. Is thus involved in a major nucleotide repair system named guanine glycation repair (GG repair), dedicated to reversing methylglyoxal and glyoxal damage via nucleotide sanitization and direct nucleic acid repair. Plays an important role in protecting cells from carbonyl stress. The sequence is that of Protein/nucleic acid deglycase HchA from Staphylococcus aureus (strain MSSA476).